The following is a 737-amino-acid chain: Disintegrin and metalloproteinase domain-containing protein 2 (737 aa).

The N-terminal stretch at 1–18 is a signal peptide; the sequence is MWLLLLLLSGLSRLGGLS. Residues 19–180 constitute a propeptide that is removed on maturation; the sequence is EPQTEGTREK…YKIRSIKPQR (162 aa). The Extracellular segment spans residues 19–688; it reads EPQTEGTREK…ASAYRSKSAR (670 aa). Residues Asn-128 and Asn-226 are each glycosylated (N-linked (GlcNAc...) asparagine). Residues 184–381 enclose the Peptidase M12B domain; sequence HYLEIHIVVE…QSSHCLQNQP (198 aa). 4 cysteine pairs are disulfide-bonded: Cys-293-Cys-376, Cys-335-Cys-360, Cys-337-Cys-342, and Cys-450-Cys-470. Residues Asn-359, Asn-464, Asn-491, and Asn-571 are each glycosylated (N-linked (GlcNAc...) asparagine). Residues 389 to 478 form the Disintegrin domain; that stretch reads MAVCGNGELE…VCEEDFFVQD (90 aa). One can recognise an EGF-like domain in the interval 617 to 650; it reads LNYDCTPEKCNHHGVCNNKKHCHCEPTYLPPDCK. Disulfide bonds link Cys-621–Cys-632, Cys-626–Cys-638, and Cys-640–Cys-649. Residues 689–709 traverse the membrane as a helical segment; sequence WPFFLIIPFYVVILVLIGMLV. The Cytoplasmic segment spans residues 710–737; that stretch reads KVYSQRKKWRMDDFSSEEQFESESESKD. Position 731 is a phosphoserine (Ser-731).

Heterodimer with ADAM1/fertilin subunit alpha. In terms of processing, the prodomain and the metalloprotease domain are cleaved during the epididymal maturation of the spermatozoa.

The protein localises to the membrane. In terms of biological role, sperm surface membrane protein that may be involved in sperm-egg plasma membrane adhesion and fusion during fertilization. Could have a direct role in sperm-zona binding or migration of sperm from the uterus into the oviduct. Interactions with egg membrane could be mediated via binding between its disintegrin-like domain to one or more integrins receptors on the egg. This is a non catalytic metalloprotease-like protein. The protein is Disintegrin and metalloproteinase domain-containing protein 2 (Adam2) of Rattus norvegicus (Rat).